The primary structure comprises 784 residues: Toll-like receptor 2 (784 aa).

A signal peptide spans 1 to 20 (MPHTLWMVWVLGVIISLSKE). Residues 21 to 587 (ESSNQASLSC…VRLSVSECHR (567 aa)) lie on the Extracellular side of the membrane. Cys-30 and Cys-36 are joined by a disulfide. LRR repeat units lie at residues 54–77 (VKSL…RCVN), 78–101 (LQAL…SLGS), 102–125 (LEHL…PLSS), 126–150 (LTFL…HLTK), 151–175 (LQIL…GLTF), 176–199 (LEEL…SIQN), 200–223 (VSHL…VTSS), 224–250 (VECL…TNSL), 251–278 (IKKF…QISG), 279–308 (LLEL…DPGK), 309–337 (VETL…LTER), 338–361 (VKRI…HLKS), 362–388 (LEYL…AWPS), 389–414 (LQTL…TLKN), 415–437 (LTNV…WPEK), 438–457 (MKYL…CIPK), 458–478 (TLEI…NLPQ), 479–500 (LKEL…LLPM), and 501–524 (LLVL…SFHT). The N-linked (GlcNAc...) asparagine glycan is linked to Asn-114. N-linked (GlcNAc...) asparagine glycosylation is present at Asn-199. Residues Cys-353 and Cys-382 are joined by a disulfide bond. An N-linked (GlcNAc...) asparagine glycan is attached at Asn-414. An intrachain disulfide couples Cys-432 to Cys-454. A glycan (N-linked (GlcNAc...) asparagine) is linked at Asn-442. In terms of domain architecture, LRRCT spans 525–579 (LKTLEAGGNNFICSCEFLSFTQEQQALAKVLIDWPANYLCDSPSHVRGQQVQDVR). The helical transmembrane segment at 588–608 (TALVSGMCCALFLLILLTGVL) threads the bilayer. Topologically, residues 609–784 (CHRFHGLWYM…WVNLRAAIKS (176 aa)) are cytoplasmic. Residues 639–782 (ICYDAFVSYS…GFWVNLRAAI (144 aa)) enclose the TIR domain. Lys-754 participates in a covalent cross-link: Glycyl lysine isopeptide (Lys-Gly) (interchain with G-Cter in ubiquitin). The short motif at 761–778 (YLEWPMDEAQREGFWVNL) is the ATG16L1-binding motif element.

The protein belongs to the Toll-like receptor family. In terms of assembly, interacts with LY96, TLR1 and TLR6 (via extracellular domain). TLR2 seems to exist in heterodimers with either TLR1 or TLR6 before stimulation by the ligand. The heterodimers form bigger oligomers in response to their corresponding ligands as well as further heterotypic associations with other receptors such as CD14 and/or CD36. Binds MYD88 (via TIR domain). Interacts with TICAM1. Interacts with CNPY3. Interacts with ATG16L1. Interacts with PPP1R11. Interacts with TICAM2. Interacts with TIRAP. Post-translationally, ubiquitinated at Lys-754 by PPP1R11, leading to its degradation. Deubiquitinated by USP2. In terms of processing, glycosylation of Asn-442 is critical for secretion of the N-terminal ectodomain of TLR2.

It localises to the membrane. The protein resides in the cytoplasmic vesicle. The protein localises to the phagosome membrane. Its subcellular location is the membrane raft. Its function is as follows. Cooperates with LY96 to mediate the innate immune response to bacterial lipoproteins and other microbial cell wall components. Cooperates with TLR1 or TLR6 to mediate the innate immune response to bacterial lipoproteins or lipopeptides. Acts via MYD88 and TRAF6, leading to NF-kappa-B activation, cytokine secretion and the inflammatory response. May also promote apoptosis in response to lipoproteins. Forms activation clusters composed of several receptors depending on the ligand, these clusters trigger signaling from the cell surface and subsequently are targeted to the Golgi in a lipid-raft dependent pathway. Forms the cluster TLR2:TLR6:CD14:CD36 in response to diacylated lipopeptides and TLR2:TLR1:CD14 in response to triacylated lipopeptides. This chain is Toll-like receptor 2 (TLR2), found in Gorilla gorilla gorilla (Western lowland gorilla).